The primary structure comprises 3674 residues: Spectrin beta chain, non-erythrocytic 5 (3674 aa).

A disordered region spans residues 1–37 (MAGQPHSPRELLGAAGHRSRRPSTELRVPPSPSLTMD). Residues 1–279 (MAGQPHSPRE…IMTYVSLYYH (279 aa)) form an actin-binding region. Calponin-homology (CH) domains follow at residues 54–159 (QMQE…LRFQ) and 177–282 (LSTK…HYCS). 8 Spectrin repeats span residues 307–416 (LQTQ…ALQQ), 428–529 (ARRF…RKQV), 642–742 (AEFL…ARLQ), 747–810 (VLQY…QGRA), 900–996 (GFCS…AVQL), 1103–1206 (ARQS…WLQE), 1209–1311 (ELQK…RQLL), and 1315–1417 (QLQE…ELQQ). The segment at 1441-1469 (ALQSSETGQDLRSSQRLQKRHQQLESESR) is disordered. Positions 1442-1456 (LQSSETGQDLRSSQR) are enriched in polar residues. Spectrin repeat units lie at residues 1521–1624 (ELHQ…CLQQ), 1628–1727 (FQQY…RELE), 1731–1835 (RLHE…ALRD), 1842–1940 (VHRD…AQLE), 1944–2046 (LLAR…ERLQ), 2052–2146 (QLFL…HALH), 2150–2253 (LMAS…ELED), 2256–2361 (NFLE…QQLE), 2366–2467 (IHVL…EALD), 2471–2574 (QAQK…QLQQ), 2577–2680 (ELQL…RLEE), 2683–2784 (QLQA…AKLQ), 2791–2890 (RLRR…TALE), 2894–2997 (LLLK…LLQQ), 3000–3103 (EAQQ…GLQE), 3106–3209 (QLHQ…ENLA), 3213–3311 (EVHS…QWLA), 3318–3415 (AFLG…RWQR), and 3422–3488 (LQKL…EQEL). One can recognise a PH domain in the interval 3533-3641 (TPTMEGSLEF…WWRALGSTAA (109 aa)).

This sequence belongs to the spectrin family. Probably associates with an alpha chain. Interacts (via C-terminus) with TRPC4. In terms of tissue distribution, expressed at very low levels in many tissues, with strongest expression in cerebellum, spinal cord, stomach, pituitary gland, liver, pancreas, salivary gland, kidney, bladder, and heart.

The protein localises to the cytoplasm. It is found in the cytoskeleton. This chain is Spectrin beta chain, non-erythrocytic 5 (SPTBN5), found in Homo sapiens (Human).